The chain runs to 72 residues: Protein kish-A (72 aa).

Positions 1 to 26 (MSAIFNFQSLLIVILLLICTCAYLRA) are cleaved as a signal peptide. Residues 27-53 (LVPNLLDKNKTGILGIFWKCARIGERK) are Extracellular-facing. An N-linked (GlcNAc...) asparagine glycan is attached at asparagine 35. A helical membrane pass occupies residues 54–71 (SPYVAVCCVVMAFSILFM). Residue glutamine 72 is a topological domain, cytoplasmic.

This sequence belongs to the KISH family.

Its subcellular location is the golgi apparatus membrane. Functionally, involved in the early part of the secretory pathway. This is Protein kish-A (tmem167a) from Xenopus tropicalis (Western clawed frog).